We begin with the raw amino-acid sequence, 98 residues long: NADH-ubiquinone oxidoreductase chain 4L (98 aa).

The next 3 helical transmembrane spans lie at 1–21 (MSLT…GLLM), 29–49 (SLLC…MVIL), and 61–81 (IILL…LVMV).

Belongs to the complex I subunit 4L family. Core subunit of respiratory chain NADH dehydrogenase (Complex I) which is composed of 45 different subunits.

It is found in the mitochondrion inner membrane. It carries out the reaction a ubiquinone + NADH + 5 H(+)(in) = a ubiquinol + NAD(+) + 4 H(+)(out). Core subunit of the mitochondrial membrane respiratory chain NADH dehydrogenase (Complex I) which catalyzes electron transfer from NADH through the respiratory chain, using ubiquinone as an electron acceptor. Part of the enzyme membrane arm which is embedded in the lipid bilayer and involved in proton translocation. This is NADH-ubiquinone oxidoreductase chain 4L (MT-ND4L) from Vampyressa thyone (Northern little yellow-eared bat).